Reading from the N-terminus, the 273-residue chain is MAKHLYKTPIPSTRKGTVDRQVKSNPRNNLIHGRHRCGKGRNSRGIITARHRGGGHKRLYRKIDFRRNQKDISGRIVTIEYDPNRNAYICLIHYGDGEKRYILHPRGAIIGDTIVSGTKVPISMGNALPLTDMPLGTAMHNIEITRGRGGQLARAAGAVAKLIAKEGKSATLRLPSGEVRLVSQNCLATVGQVGNVGVNQKSLGRAGSKCWLGKRPVVRGVVMNPVDHPHGGGEGKAPIGRKKPTTPWGYPALGRRTRKRKKYSDSFILRRRK.

Disordered regions lie at residues M1–R27 and P225–K273.

It belongs to the universal ribosomal protein uL2 family. In terms of assembly, part of the 50S ribosomal subunit.

It is found in the plastid. The protein localises to the chloroplast. The polypeptide is Large ribosomal subunit protein uL2cz/uL2cy (rpl2-A) (Lolium perenne (Perennial ryegrass)).